A 132-amino-acid chain; its full sequence is Fluoride-specific ion channel FluC 1 (132 aa).

A run of 4 helical transmembrane segments spans residues A11–I31, W37–T57, R70–I92, and A105–V125. Positions 79 and 82 each coordinate Na(+).

It belongs to the fluoride channel Fluc/FEX (TC 1.A.43) family.

It is found in the cell membrane. The catalysed reaction is fluoride(in) = fluoride(out). Its activity is regulated as follows. Na(+) is not transported, but it plays an essential structural role and its presence is essential for fluoride channel function. In terms of biological role, fluoride-specific ion channel. Important for reducing fluoride concentration in the cell, thus reducing its toxicity. The chain is Fluoride-specific ion channel FluC 1 from Mycobacterium bovis (strain ATCC BAA-935 / AF2122/97).